A 389-amino-acid polypeptide reads, in one-letter code: Putative phosphoserine aminotransferase (389 aa).

Arg-45 serves as a coordination point for L-glutamate. Residues 79 to 80 (GT), Trp-114, Thr-169, Asp-191, and Gln-214 contribute to the pyridoxal 5'-phosphate site. Lys-215 is modified (N6-(pyridoxal phosphate)lysine). 265–266 (NT) lines the pyridoxal 5'-phosphate pocket.

Belongs to the class-V pyridoxal-phosphate-dependent aminotransferase family. SerC subfamily. As to quaternary structure, homodimer. Pyridoxal 5'-phosphate is required as a cofactor.

The catalysed reaction is O-phospho-L-serine + 2-oxoglutarate = 3-phosphooxypyruvate + L-glutamate. The enzyme catalyses 4-(phosphooxy)-L-threonine + 2-oxoglutarate = (R)-3-hydroxy-2-oxo-4-phosphooxybutanoate + L-glutamate. It functions in the pathway amino-acid biosynthesis; L-serine biosynthesis; L-serine from 3-phospho-D-glycerate: step 2/3. Its pathway is cofactor biosynthesis; pyridoxine 5'-phosphate biosynthesis; pyridoxine 5'-phosphate from D-erythrose 4-phosphate: step 3/5. In terms of biological role, catalyzes the reversible conversion of 3-phosphohydroxypyruvate to phosphoserine and of 3-hydroxy-2-oxo-4-phosphonooxybutanoate to phosphohydroxythreonine. The polypeptide is Putative phosphoserine aminotransferase (Schizosaccharomyces pombe (strain 972 / ATCC 24843) (Fission yeast)).